The primary structure comprises 226 residues: Ribosomal RNA small subunit methyltransferase G (226 aa).

S-adenosyl-L-methionine-binding positions include Gly95, Leu100, 146 to 147, and Arg159; that span reads VE.

Belongs to the methyltransferase superfamily. RNA methyltransferase RsmG family.

It is found in the cytoplasm. The catalysed reaction is guanosine(527) in 16S rRNA + S-adenosyl-L-methionine = N(7)-methylguanosine(527) in 16S rRNA + S-adenosyl-L-homocysteine. Its function is as follows. Specifically methylates the N7 position of guanine in position 527 of 16S rRNA. This chain is Ribosomal RNA small subunit methyltransferase G, found in Acidovorax ebreus (strain TPSY) (Diaphorobacter sp. (strain TPSY)).